Consider the following 492-residue polypeptide: Pyrin and HIN domain-containing protein 1 (492 aa).

The region spanning 1-88 is the Pyrin domain; it reads MANNYKKIVL…AETLKREKLK (88 aa). Disordered stretches follow at residues 106–199 and 400–492; these read KTKQ…KPLA and KNTN…PAVP. Positions 142 to 159 are enriched in basic and acidic residues; that stretch reads PSEEETGTKRSKMSKEQT. Positions 160–173 are enriched in polar residues; that stretch reads RPSCSAGASTSTAM. Positions 181–194 are enriched in low complexity; the sequence is TSSSAPPNTSSTES. An HIN-200 domain is found at 199–399; sequence ANRHATASKN…SEMHSFIQIQ (201 aa). Composition is skewed to polar residues over residues 416-432 and 460-492; these read QEQSQHPKPSEASTTLP and GAQSSPANFRITSPTVAPPLSSDTSTNRHPAVP.

Belongs to the HIN-200 family. In terms of assembly, interacts with MDM2. Expressed in spleen, lymph node and peripheral blood leukocytes, and at lower levels in thymus, bone marrow and fetal liver. Down-regulated in breast tumors.

The protein resides in the nucleus. It is found in the nucleoplasm. The protein localises to the nucleus speckle. Its function is as follows. Major mediator of the tumor suppressor activity of IFN in breast cancer cells. Promotes ubiquitination and subsequent degradation of MDM2, which leads to p53/TP53 stabilization. Promotes ubiquitination and subsequent degradation of HDAC1, which in turn enhances maspin expression, and impairs invasive activity of cancer cells. The polypeptide is Pyrin and HIN domain-containing protein 1 (PYHIN1) (Homo sapiens (Human)).